A 506-amino-acid polypeptide reads, in one-letter code: 2-isopropylmalate synthase (506 aa).

The Pyruvate carboxyltransferase domain maps to 4-266 (ILFMDTTLRD…EPSMTLKEIK (263 aa)). Residues aspartate 13, histidine 201, histidine 203, and asparagine 237 each coordinate Mn(2+). Residues 390 to 506 (NITQLQVHFV…KLKSFIQLVK (117 aa)) are regulatory domain.

Belongs to the alpha-IPM synthase/homocitrate synthase family. LeuA type 1 subfamily. Homodimer. Mn(2+) is required as a cofactor.

It is found in the cytoplasm. The enzyme catalyses 3-methyl-2-oxobutanoate + acetyl-CoA + H2O = (2S)-2-isopropylmalate + CoA + H(+). Its pathway is amino-acid biosynthesis; L-leucine biosynthesis; L-leucine from 3-methyl-2-oxobutanoate: step 1/4. In terms of biological role, catalyzes the condensation of the acetyl group of acetyl-CoA with 3-methyl-2-oxobutanoate (2-ketoisovalerate) to form 3-carboxy-3-hydroxy-4-methylpentanoate (2-isopropylmalate). The polypeptide is 2-isopropylmalate synthase (Bacillus cereus (strain ATCC 10987 / NRS 248)).